A 749-amino-acid chain; its full sequence is Taperin (749 aa).

Residues 144-348 (PAAPCRRGSP…IRPSSKPDME (205 aa)) are disordered. Composition is skewed to polar residues over residues 169 to 179 (SAATRTPTNRS), 230 to 239 (LQKTGSNSFT), and 250 to 266 (VNRS…SPTG). A Phosphoserine modification is found at Ser-274. A compositionally biased stretch (polar residues) spans 323–335 (QRQWVSSATSAND). Basic and acidic residues predominate over residues 337 to 347 (FEIRPSSKPDM). Phosphoserine is present on residues Ser-401, Ser-457, and Ser-501. Disordered stretches follow at residues 502–586 (EEEA…TTLE), 636–673 (FEYP…SEKP), and 730–749 (LTPA…ALYF). Composition is skewed to polar residues over residues 534–544 (ELLNRGSNTFT) and 558–570 (HLSQ…QQGA). A compositionally biased stretch (acidic residues) spans 647–668 (EEAEEEEEEEGEEDGEEEEVGP).

Belongs to the taperin family. In terms of assembly, interacts with GRXCR2; the interaction restricts TPRN to the stereocilum basal region. Interacts with actin ACTB; the interaction may stabilize stereocilia. Interacts with CLIC5. Interacts with PTPRQ. TPRN, CLIC5 and PTPQR form concentric rings at the base of stereocilia and may form a complex. Interacts with phosphatase PPP1CA; the interaction results in inhibition of PPP1CA phosphatase activity. Interacts with DNA damage response proteins XRCC6/KU70, XRCC5/KU80, PARP1, TOP1 and TOP2A; these interactions recruit TPRN to sites of DNA damage where it may play a role in DNA repair. In terms of tissue distribution, in the organ of Corti, expressed in the inner ear hair cell stereocilia and the supporting cells (at protein level). Expressed in the sensory epithelia of the organ of Corti and vestibular end organs and, to a lesser extent, in Reisner's membrane and the spiral ligament (at protein level). At postnatal day 2, expression is detected in cochlea, liver, brain, kidney, heart and lung.

It localises to the cell projection. It is found in the stereocilium. The protein resides in the microvillus. The protein localises to the nucleus. Its subcellular location is the nucleoplasm. It localises to the cytoplasm. Essential for hearing. Required for maintenance of stereocilia on both inner and outer hair cells. Necessary for the integrity of the stereociliary rootlet. May act as an actin cytoskeleton regulator involved in the regulation of actin dynamics at the pointed end in hair cells. Forms rings at the base of stereocilia and binds actin filaments in the stereocilia which may stabilize the stereocilia. Acts as a strong inhibitor of PPP1CA phosphatase activity. Recruited to sites of DNA damage and may play a role in DNA damage repair. The protein is Taperin (Tprn) of Mus musculus (Mouse).